We begin with the raw amino-acid sequence, 165 residues long: MIIEGPVIKFGDKIDTDIIIPARYLKYTDPQYLAQHVMEPLDPEFYKKASKGVIIVAGKVFGMGSSREQAAIALKAAGVKAVVAESFARIFYRNAINNGLPVITLPNSTKEIDENSYVKIDVETGEILVGNKVLKGKGITEMALEILQAGGIMEYLKKMQTVNRN.

The protein belongs to the LeuD family. LeuD type 2 subfamily. As to quaternary structure, heterodimer of LeuC and LeuD.

It carries out the reaction (2R,3S)-3-isopropylmalate = (2S)-2-isopropylmalate. The protein operates within amino-acid biosynthesis; L-leucine biosynthesis; L-leucine from 3-methyl-2-oxobutanoate: step 2/4. Functionally, catalyzes the isomerization between 2-isopropylmalate and 3-isopropylmalate, via the formation of 2-isopropylmaleate. This is 3-isopropylmalate dehydratase small subunit from Saccharolobus islandicus (strain Y.N.15.51 / Yellowstone #2) (Sulfolobus islandicus).